A 201-amino-acid chain; its full sequence is Elongation factor Ts (201 aa).

The tract at residues 83 to 86 (TDFV) is involved in Mg(2+) ion dislocation from EF-Tu.

The protein belongs to the EF-Ts family.

It is found in the cytoplasm. Functionally, associates with the EF-Tu.GDP complex and induces the exchange of GDP to GTP. It remains bound to the aminoacyl-tRNA.EF-Tu.GTP complex up to the GTP hydrolysis stage on the ribosome. The protein is Elongation factor Ts of Methylacidiphilum infernorum (isolate V4) (Methylokorus infernorum (strain V4)).